A 474-amino-acid chain; its full sequence is Ubiquinol-cytochrome-c reductase complex core protein 2, mitochondrial (474 aa).

The transit peptide at methionine 1–arginine 42 directs the protein to the mitochondrion.

The protein belongs to the peptidase M16 family. UQCRC2/QCR2 subfamily. In terms of assembly, component of the ubiquinol-cytochrome c oxidoreductase (cytochrome b-c1 complex, complex III, CIII), a multisubunit enzyme composed of 3 respiratory subunits cytochrome b, cytochrome c1 and Rieske protein, 2 core protein subunits, and additional low-molecular weight protein subunits. The complex exists as an obligatory dimer and forms supercomplexes (SCs) in the inner mitochondrial membrane with cytochrome c oxidase (complex IV, CIV).

It localises to the mitochondrion inner membrane. In terms of biological role, component of the ubiquinol-cytochrome c oxidoreductase, a multisubunit transmembrane complex that is part of the mitochondrial electron transport chain which drives oxidative phosphorylation. The respiratory chain contains 3 multisubunit complexes succinate dehydrogenase (complex II, CII), ubiquinol-cytochrome c oxidoreductase (cytochrome b-c1 complex, complex III, CIII) and cytochrome c oxidase (complex IV, CIV), that cooperate to transfer electrons derived from NADH and succinate to molecular oxygen, creating an electrochemical gradient over the inner membrane that drives transmembrane transport and the ATP synthase. The cytochrome b-c1 complex catalyzes electron transfer from ubiquinol to cytochrome c, linking this redox reaction to translocation of protons across the mitochondrial inner membrane, with protons being carried across the membrane as hydrogens on the quinol. In the process called Q cycle, 2 protons are consumed from the matrix, 4 protons are released into the intermembrane space and 2 electrons are passed to cytochrome c. This is Ubiquinol-cytochrome-c reductase complex core protein 2, mitochondrial from Euglena gracilis.